The following is a 514-amino-acid chain: MKAKLLVSTAFLAASVSLSAQKSATITVHADQGKEIIPKEIYGQFAEHLGSCIYGGLWVGENSDIPNIKGYRTDVFNALKDLSVPVLRWPGGCFADEYHWMDGIGPKENRPKMVNNNWGGTIEDNSFGTHEFLNLCEMLGCEPYVSGNVGSGTVEELAKWVEYMTSDGDSPMANLRRKNGRDKAWKLKYLGVGNESWGCGGSMRPEYYADLYRRYSTYCRNYDGNRLFKIASGASDYDYKWTDVLMNRVGHRMDGLSLHYYTVTGWSGSKGSATQFNKDDYYWTMGKCLEVEDVLKKHCTIMDKYDKDKKIALLLDEWGTWWDEEPGTIKGHLYQQNTLRDAFVASLSLDVFHKYTDRLKMANIAQIVNVLQSMILTKDKEMVLTPTYYVFKMYKVHQDATYLPIDLTCEKMSVRDNRTVPMVSATASKNKDGVIHISLSNVDADEAQEITINLGDTKAKKAIGEILTASKLTDYNSFEKPNIVKPAPFKEVKINKGTMKVKLPAKSIVTLELQ.

The alpha-L-arabinofuranose site is built by Glu47 and Asn194. The active-site Proton donor/acceptor is the Glu195. Tyr261, Glu317, and Gln366 together coordinate alpha-L-arabinofuranose. The active-site Nucleophile is the Glu317.

Belongs to the glycosyl hydrolase 51 family. In terms of assembly, homohexamer; trimer of dimers.

Its subcellular location is the cytoplasm. The catalysed reaction is Hydrolysis of terminal non-reducing alpha-L-arabinofuranoside residues in alpha-L-arabinosides.. It functions in the pathway glycan metabolism; L-arabinan degradation. Involved in the degradation of arabinan and is a key enzyme in the complete degradation of the plant cell wall. Catalyzes the cleavage of terminal alpha-L-arabinofuranosyl residues in different hemicellulosic homopolysaccharides (branched and debranched arabinans) and heteropolysaccharides (arabinoxylans). The chain is Intracellular exo-alpha-L-arabinofuranosidase (asdII) from Bacteroides ovatus.